The following is a 479-amino-acid chain: Anaerobic nitric oxide reductase flavorubredoxin (479 aa).

The tract at residues 30–210 (LRGSSYNSYL…PFSRLVTPKI (181 aa)) is zinc metallo-hydrolase. Residues histidine 79, glutamate 81, aspartate 83, histidine 147, aspartate 166, and histidine 227 each contribute to the Fe cation site. The Flavodoxin-like domain occupies 254-393 (ITIFYDTMSN…LCRQHGRDIA (140 aa)). FMN-binding positions include 260–264 (TMSNN) and 342–369 (AFGS…EMSL). The region spanning 423 to 474 (GPKMQCSVCQWIYDPALGEPLQDVAPGTPWSDVPDNFLCPECSLGKDVFDVL) is the Rubredoxin-like domain. Fe cation is bound by residues cysteine 428, cysteine 431, cysteine 461, and cysteine 464.

In the N-terminal section; belongs to the zinc metallo-hydrolase group 3 family. In terms of assembly, homotetramer. It depends on Fe cation as a cofactor. FMN serves as cofactor.

Its subcellular location is the cytoplasm. Its pathway is nitrogen metabolism; nitric oxide reduction. Its function is as follows. Anaerobic nitric oxide reductase; uses NADH to detoxify nitric oxide (NO), protecting several 4Fe-4S NO-sensitive enzymes. Has at least 2 reductase partners, only one of which (NorW, flavorubredoxin reductase) has been identified. NO probably binds to the di-iron center; electrons enter from the NorW at rubredoxin and are transferred sequentially to the FMN center and the di-iron center. Also able to function as an aerobic oxygen reductase. This is Anaerobic nitric oxide reductase flavorubredoxin from Salmonella paratyphi B (strain ATCC BAA-1250 / SPB7).